The following is a 304-amino-acid chain: Ribonuclease BN (304 aa).

Zn(2+)-binding residues include His63, His65, Asp67, His68, His140, Asp211, and His269. Residue Asp67 is the Proton acceptor of the active site.

The protein belongs to the RNase Z family. RNase BN subfamily. As to quaternary structure, homodimer. Zn(2+) serves as cofactor.

Its function is as follows. Zinc phosphodiesterase, which has both exoribonuclease and endoribonuclease activities. In Cronobacter sakazakii (strain ATCC BAA-894) (Enterobacter sakazakii), this protein is Ribonuclease BN.